A 316-amino-acid polypeptide reads, in one-letter code: Beta-ketoacyl-[acyl-carrier-protein] synthase III (316 aa).

Catalysis depends on residues Cys112 and His243. An ACP-binding region spans residues 244 to 248 (QANLR). Asn273 is a catalytic residue.

The protein belongs to the thiolase-like superfamily. FabH family. As to quaternary structure, homodimer.

It is found in the cytoplasm. The enzyme catalyses malonyl-[ACP] + acetyl-CoA + H(+) = 3-oxobutanoyl-[ACP] + CO2 + CoA. Its pathway is lipid metabolism; fatty acid biosynthesis. Catalyzes the condensation reaction of fatty acid synthesis by the addition to an acyl acceptor of two carbons from malonyl-ACP. Catalyzes the first condensation reaction which initiates fatty acid synthesis and may therefore play a role in governing the total rate of fatty acid production. Possesses both acetoacetyl-ACP synthase and acetyl transacylase activities. Its substrate specificity determines the biosynthesis of branched-chain and/or straight-chain of fatty acids. In Haemophilus influenzae (strain 86-028NP), this protein is Beta-ketoacyl-[acyl-carrier-protein] synthase III.